The following is a 407-amino-acid chain: 4-hydroxy-3-methylbut-2-en-1-yl diphosphate synthase (ferredoxin) (407 aa).

[4Fe-4S] cluster is bound by residues Cys-316, Cys-319, Cys-350, and Glu-357.

It belongs to the IspG family. Requires [4Fe-4S] cluster as cofactor.

It catalyses the reaction (2E)-4-hydroxy-3-methylbut-2-enyl diphosphate + 2 oxidized [2Fe-2S]-[ferredoxin] + H2O = 2-C-methyl-D-erythritol 2,4-cyclic diphosphate + 2 reduced [2Fe-2S]-[ferredoxin] + H(+). It participates in isoprenoid biosynthesis; isopentenyl diphosphate biosynthesis via DXP pathway; isopentenyl diphosphate from 1-deoxy-D-xylulose 5-phosphate: step 5/6. Converts 2C-methyl-D-erythritol 2,4-cyclodiphosphate (ME-2,4cPP) into 1-hydroxy-2-methyl-2-(E)-butenyl 4-diphosphate. The protein is 4-hydroxy-3-methylbut-2-en-1-yl diphosphate synthase (ferredoxin) of Cyanothece sp. (strain PCC 7425 / ATCC 29141).